A 754-amino-acid polypeptide reads, in one-letter code: Anaphase-promoting complex subunit cdh1 (754 aa).

Over residues methionine 1 to leucine 10 the composition is skewed to basic and acidic residues. Disordered stretches follow at residues methionine 1–asparagine 30, tyrosine 47–threonine 116, and isoleucine 200–asparagine 351. Low complexity-rich tracts occupy residues asparagine 50–threonine 116 and asparagine 202–asparagine 325. The segment covering glutamine 326–methionine 339 has biased composition (polar residues). Low complexity predominate over residues asparagine 340–asparagine 351. 4 WD repeats span residues lysine 411–leucine 448, glutamate 452–glutamate 492, glycine 495–threonine 532, and glycine 537–glutamine 576. Residues methionine 570–glutamine 598 are disordered. Over residues serine 587 to glutamine 598 the composition is skewed to low complexity. WD repeat units follow at residues phenylalanine 610 to serine 652, aspartate 654 to threonine 695, and glycine 698 to serine 737.

Belongs to the WD repeat CDC20/Fizzy family. The APC/C is composed of at least 13 subunits that stay tightly associated throughout the cell cycle: anapc1, anapc2, anapc3, anapc4, anapc5, anapc6, anapc7, anapc8, anapc10, anapc11, cdc20, cdc26 and cdh1.

It localises to the nucleus. It participates in protein modification; protein ubiquitination. Its function is as follows. Component of the anaphase promoting complex/cyclosome (APC/C), a cell cycle-regulated E3 ubiquitin-protein ligase complex that controls progression through mitosis and the G1 phase of the cell cycle. In Dictyostelium discoideum (Social amoeba), this protein is Anaphase-promoting complex subunit cdh1 (cdh1).